The primary structure comprises 1342 residues: DNA-directed RNA polymerase subunit beta (1342 aa).

Belongs to the RNA polymerase beta chain family. As to quaternary structure, the RNAP catalytic core consists of 2 alpha, 1 beta, 1 beta' and 1 omega subunit. When a sigma factor is associated with the core the holoenzyme is formed, which can initiate transcription.

It catalyses the reaction RNA(n) + a ribonucleoside 5'-triphosphate = RNA(n+1) + diphosphate. DNA-dependent RNA polymerase catalyzes the transcription of DNA into RNA using the four ribonucleoside triphosphates as substrates. The polypeptide is DNA-directed RNA polymerase subunit beta (Aliivibrio fischeri (strain ATCC 700601 / ES114) (Vibrio fischeri)).